Reading from the N-terminus, the 232-residue chain is 7-cyano-7-deazaguanine synthase (232 aa).

8-18 (FSGGQDSTTCL) contacts ATP. Positions 189, 198, 201, and 204 each coordinate Zn(2+).

The protein belongs to the QueC family. It depends on Zn(2+) as a cofactor.

It carries out the reaction 7-carboxy-7-deazaguanine + NH4(+) + ATP = 7-cyano-7-deazaguanine + ADP + phosphate + H2O + H(+). The protein operates within purine metabolism; 7-cyano-7-deazaguanine biosynthesis. Functionally, catalyzes the ATP-dependent conversion of 7-carboxy-7-deazaguanine (CDG) to 7-cyano-7-deazaguanine (preQ(0)). In Yersinia pseudotuberculosis serotype O:1b (strain IP 31758), this protein is 7-cyano-7-deazaguanine synthase.